The following is a 292-amino-acid chain: Zinc finger protein SNAI3 (292 aa).

Residues 1-20 are SNAG domain; sequence MPRSFLVKTHSSHRVPNYRR. C2H2-type zinc fingers lie at residues 152 to 174, 183 to 205, 209 to 231, and 237 to 259; these read FECF…RQLH, FTCK…IRTH, CTCK…VRTH, and YACS…LQTH. The segment at 265–287 adopts a C2H2-type 5; degenerate zinc-finger fold; it reads YRCRRCTKTFSRMSLLARHEESG.

Belongs to the snail C2H2-type zinc-finger protein family.

Its subcellular location is the nucleus. Seems to inhibit myoblast differentiation. Transcriptional repressor of E-box-dependent transactivation of downstream myogenic bHLHs genes. Binds preferentially to the canonical E-box sequences 5'-CAGGTG-3' and 5'-CACCTG-3'. The chain is Zinc finger protein SNAI3 (SNAI3) from Homo sapiens (Human).